A 673-amino-acid chain; its full sequence is Hemocyanin subunit C (673 aa).

A signal peptide spans 1-20 (MGAWKVWTFFAIALVVAVKA). Positions 207, 211, and 237 each coordinate Cu cation. N-linked (GlcNAc...) asparagine glycosylation is present at Asn-323. Cu cation is bound by residues His-358, His-362, and His-398. Residues Cys-568 and Cys-616 are joined by a disulfide bond.

The protein belongs to the tyrosinase family. Hemocyanin subfamily. 36-chain polymer consisting of 6 hexamers, each of which includes 4 different chains, A, B, C and D. Hemolymph.

The protein resides in the secreted. It localises to the extracellular space. Its function is as follows. Hemocyanins are copper-containing oxygen carriers occurring freely dissolved in the hemolymph of many mollusks and arthropods. In Scutigera coleoptrata (House centipede), this protein is Hemocyanin subunit C (HCC).